Here is a 1116-residue protein sequence, read N- to C-terminus: Pleckstrin homology domain-containing family A member 5 (1116 aa).

Position 2 is an N-acetylalanine (A2). The WW 1 domain maps to 10-43 (ISLPRSWTYGITRGGRVFFINEEAKSTTWLHPVT). S55 is modified (phosphoserine). Residues 56–89 (TDLPTGWEEAYTFEGARYYINHNERKVTCKHPVT) form the WW 2 domain. Residues 140-163 (SPVGRTSRASKKVHNFGKRSNSIK) are disordered. The segment covering 147-156 (RASKKVHNFG) has biased composition (basic residues). The region spanning 169-268 (PVVRRGWLYK…WMKAMLDAAL (100 aa)) is the PH domain. A Glycyl lysine isopeptide (Lys-Gly) (interchain with G-Cter in SUMO2) cross-link involves residue K301. Residues S382 and S410 each carry the phosphoserine modification. Phosphothreonine is present on residues T438 and T460. The disordered stretch occupies residues 459–495 (RTLPRNSKTRPESICSVTPSTHDKTLGPGAEEKRRSM). Residues 479 to 495 (THDKTLGPGAEEKRRSM) are compositionally biased toward basic and acidic residues. Residues S568, S607, S809, S855, S933, and S937 each carry the phosphoserine modification. Disordered regions lie at residues 928–978 (GASD…PATE) and 1025–1116 (RNKD…FMCV). Over residues 930–949 (SDQSPLQSPSNLRDNPFRTT) the composition is skewed to polar residues. Residues 952–978 (RRRDDKELDTAIRENDVKPDHETPATE) are compositionally biased toward basic and acidic residues. Over residues 1036 to 1046 (FSPQDETQTAN) the composition is skewed to polar residues. The segment covering 1047-1061 (HKPEEHPEENTKNSV) has biased composition (basic and acidic residues). Positions 1070–1085 (SYESTPEVSRGNQTMA) are enriched in polar residues. Over residues 1088 to 1101 (SLSPSPESSASPVP) the composition is skewed to low complexity.

As to expression, highly expressed in heart and kidney.

The protein localises to the cytoplasm. The chain is Pleckstrin homology domain-containing family A member 5 (PLEKHA5) from Homo sapiens (Human).